The sequence spans 957 residues: Sorting nexin-13 (957 aa).

In terms of domain architecture, PXA spans 97-284 (ANIIDEPLQQ…YVIWMIRDSN (188 aa)). The RGS domain maps to 373 to 511 (PLDSILVDNV…SFRQNALYVR (139 aa)). A PX domain is found at 559-680 (VQLHAYISDT…DFLENKAYSK (122 aa)). Residues R601, S603, K628, and R642 each contribute to the a 1,2-diacyl-sn-glycero-3-phospho-(1D-myo-inositol-3-phosphate) site.

It belongs to the sorting nexin family.

It is found in the early endosome membrane. Its function is as follows. May be involved in several stages of intracellular trafficking. Acts as a GAP for Galphas. May play a role in endosome homeostasis. The polypeptide is Sorting nexin-13 (Snx13) (Mus musculus (Mouse)).